A 296-amino-acid chain; its full sequence is GTP-binding protein GEM (296 aa).

Disordered stretches follow at residues 1-20 and 37-68; these read MTLN…PQQQ and PHQY…SVIS. Residues 57–68 are compositionally biased toward low complexity; that stretch reads SWSSDSTDSVIS. Residues 82 to 89 and 191 to 194 each bind GTP; these read GEQGVGKS and NKSD. Residues 266 to 285 form a calmodulin-binding region; that stretch reads ARRFWGKIVAKNNKNMAFKL.

This sequence belongs to the small GTPase superfamily. RGK family. Interacts with calmodulin in a Ca(2+)-dependent manner. Binds ROCK1. Post-translationally, phosphorylated on tyrosine residues. As to expression, most abundant in thymus, spleen, kidney, lung, and testis. Less abundant in heart, brain, liver and skeletal muscle.

The protein resides in the cell membrane. In terms of biological role, could be a regulatory protein, possibly participating in receptor-mediated signal transduction at the plasma membrane. Has guanine nucleotide-binding activity but undetectable intrinsic GTPase activity. This Homo sapiens (Human) protein is GTP-binding protein GEM (GEM).